The sequence spans 543 residues: RuBisCO large subunit-binding protein subunit alpha, chloroplastic (543 aa).

The transit peptide at 1 to 2 (GA) directs the protein to the chloroplast.

It belongs to the chaperonin (HSP60) family. As to quaternary structure, oligomer of probably six alpha and six beta subunits.

The protein resides in the plastid. It is found in the chloroplast. Its function is as follows. This protein binds RuBisCO small and large subunits and is implicated in the assembly of the enzyme oligomer. The chain is RuBisCO large subunit-binding protein subunit alpha, chloroplastic from Triticum aestivum (Wheat).